The primary structure comprises 294 residues: Coiled-coil domain-containing protein 69 (294 aa).

The segment at 1-43 is disordered; sequence MGCGHSRLSCCKPPKKRRQRPDQPPKPEPQELGPLNGDTATTD. The N-myristoyl glycine moiety is linked to residue glycine 2. A compositionally biased stretch (basic and acidic residues) spans 20 to 29; that stretch reads RPDQPPKPEP. Residues 47–270 adopt a coiled-coil conformation; the sequence is ASEEAEQHQK…QEKEELLYRV (224 aa). A phosphoserine mark is found at serine 152 and serine 239.

This sequence belongs to the CCDC69 family.

The protein resides in the cytoplasm. It is found in the cytoskeleton. It localises to the spindle. The protein localises to the midbody. May act as a scaffold to regulate the recruitment and assembly of spindle midzone components. Required for the localization of AURKB and PLK1 to the spindle midzone. In Bos taurus (Bovine), this protein is Coiled-coil domain-containing protein 69 (CCDC69).